A 197-amino-acid chain; its full sequence is LexA repressor (197 aa).

The H-T-H motif DNA-binding region spans 28-47 (VREIARRFRITPRGAQLHLV). Active-site for autocatalytic cleavage activity residues include Ser-119 and Lys-156.

Belongs to the peptidase S24 family. In terms of assembly, homodimer.

The catalysed reaction is Hydrolysis of Ala-|-Gly bond in repressor LexA.. Represses a number of genes involved in the response to DNA damage (SOS response), including recA and lexA. In the presence of single-stranded DNA, RecA interacts with LexA causing an autocatalytic cleavage which disrupts the DNA-binding part of LexA, leading to derepression of the SOS regulon and eventually DNA repair. The polypeptide is LexA repressor (Thermotoga neapolitana).